The following is a 177-amino-acid chain: MSRIGKKPVQVPAGVTANVDGQKVTAKGPKGELFFVANDEVSVKLENNTVVVQPLNESKDARAKWGMSRTMIENILKGVKDGYERKLEINGVGYRASMQGKNLQLALGFSHDVVYQTPEGITIAVPKPTEIVVSGINKQQVGQVAAEIREYRGPEPYKGKGVKYAEERIVRKEGKKK.

Belongs to the universal ribosomal protein uL6 family. In terms of assembly, part of the 50S ribosomal subunit.

Functionally, this protein binds to the 23S rRNA, and is important in its secondary structure. It is located near the subunit interface in the base of the L7/L12 stalk, and near the tRNA binding site of the peptidyltransferase center. This is Large ribosomal subunit protein uL6 from Rhizobium meliloti (strain 1021) (Ensifer meliloti).